The chain runs to 492 residues: Catalase isozyme C (492 aa).

Heme is bound at residue Arg62. His65 is a catalytic residue. Heme is bound at residue Arg102. Asn138 is an active-site residue. Phe151 contacts heme. Tyr210 is subject to Phosphotyrosine; by STRK1. The segment at residues 325 to 348 (CPGIIVPGIYYSDDKLLQTRIFSY) is a cross-link (3-(S-cysteinyl)-tyrosine (Cys-Tyr)). Arg344, Tyr348, and Arg355 together coordinate heme. The Peroxisome targeting signal motif lies at 484–492 (SRLSAKPSM).

This sequence belongs to the catalase family. In terms of assembly, homotetramer. Interacts with GLO1 and GLO4; these interactions are disturbed by alpha-hydroxy-2-pyridinemethanesulfonic acid (HPMS) and salicylic acid (SA). Interacts with STRK1 at the plasma membrane. It depends on heme as a cofactor. Post-translationally, activated by STRK1-mediated phosphorylation at Tyr-210 upon salt and oxidative stress. Highly expressed in mature leaves. Mainly expressed in leaf blades, stems, panicles, leaf sheaths, and culms, but barely in roots.

Its subcellular location is the peroxisome. The protein localises to the glyoxysome. The protein resides in the cell membrane. It catalyses the reaction 2 H2O2 = O2 + 2 H2O. With respect to regulation, strongly inhibited by beta-mercaptoethanol, sodium azide and potassium cyanide. Slightly repressed by 3-amino-1,2,4-triazole (3-AT). Activity is repressed proportionally to increased concentration of NaCl, KCl, LiCl and MgCl(2). Its function is as follows. Occurs in almost all aerobically respiring organisms and serves to protect cells from the toxic effects of hydrogen peroxide. Responsible for the redox homeostasis in leaves. Prevents nitric oxide (NO) accumulation and subsequent NO-mediated leaf cell death as well as the S-nitrosylation of specific proteins (e.g. glyceraldehyde 3-phosphate dehydrogenase and thioredoxin) by degrading H(2)O(2). Involved in photorespiration. Promotes drought stress tolerance and recovery. Involved in NO-mediated enhanced tolerance to zinc oxide nanoparticles (ZnO NPs)-induced phytotoxicity. Participates in melatonin-mediated detoxification. The chain is Catalase isozyme C from Oryza sativa subsp. japonica (Rice).